Consider the following 994-residue polypeptide: Alpha-mannosidase F (994 aa).

The signal sequence occupies residues Met1–Ser20. Zn(2+) is bound by residues His35, Asp37, and Asp151. The active-site Nucleophile is Asp151. Asn247 and Asn381 each carry an N-linked (GlcNAc...) asparagine glycan. His392 provides a ligand contact to Zn(2+). Residues Asn554, Asn712, and Asn932 are each glycosylated (N-linked (GlcNAc...) asparagine).

It belongs to the glycosyl hydrolase 38 family. Requires Zn(2+) as cofactor.

Its subcellular location is the secreted. The catalysed reaction is Hydrolysis of terminal, non-reducing alpha-D-mannose residues in alpha-D-mannosides.. The polypeptide is Alpha-mannosidase F (manF) (Dictyostelium discoideum (Social amoeba)).